A 455-amino-acid polypeptide reads, in one-letter code: Zinc finger SWIM domain-containing protein 1 (455 aa).

The segment at 264–288 is disordered; sequence ASLSLAETPQDSHTPSEASAENPNT. The SWIM-type zinc finger occupies 333–375; sequence MSIQILEDTHTVQPQPPASCSCYFNQAFHLPCRHILAMLSARQ.

This chain is Zinc finger SWIM domain-containing protein 1 (Zswim1), found in Mus musculus (Mouse).